Consider the following 189-residue polypeptide: UPF0312 protein VC_A0539 (189 aa).

An N-terminal signal peptide occupies residues 1-22 (MKKTLMAVGLAAVMSIPFAANA).

It belongs to the UPF0312 family. Type 1 subfamily.

It localises to the periplasm. In Vibrio cholerae serotype O1 (strain ATCC 39315 / El Tor Inaba N16961), this protein is UPF0312 protein VC_A0539.